The chain runs to 156 residues: Small ribosomal subunit protein uS7 (156 aa).

It belongs to the universal ribosomal protein uS7 family. In terms of assembly, part of the 30S ribosomal subunit. Contacts proteins S9 and S11.

In terms of biological role, one of the primary rRNA binding proteins, it binds directly to 16S rRNA where it nucleates assembly of the head domain of the 30S subunit. Is located at the subunit interface close to the decoding center, probably blocks exit of the E-site tRNA. This Anoxybacillus flavithermus (strain DSM 21510 / WK1) protein is Small ribosomal subunit protein uS7.